The chain runs to 243 residues: 2,3-bisphosphoglycerate-dependent phosphoglycerate mutase (243 aa).

Substrate is bound by residues arginine 8 to asparagine 15, threonine 21 to glycine 22, arginine 60, glutamate 87 to tyrosine 90, lysine 98, arginine 114 to arginine 115, and glycine 183 to asparagine 184. The active-site Tele-phosphohistidine intermediate is histidine 9. Glutamate 87 acts as the Proton donor/acceptor in catalysis.

This sequence belongs to the phosphoglycerate mutase family. BPG-dependent PGAM subfamily. As to quaternary structure, homodimer.

It carries out the reaction (2R)-2-phosphoglycerate = (2R)-3-phosphoglycerate. It functions in the pathway carbohydrate degradation; glycolysis; pyruvate from D-glyceraldehyde 3-phosphate: step 3/5. Its function is as follows. Catalyzes the interconversion of 2-phosphoglycerate and 3-phosphoglycerate. The protein is 2,3-bisphosphoglycerate-dependent phosphoglycerate mutase of Maricaulis maris (strain MCS10) (Caulobacter maris).